A 356-amino-acid polypeptide reads, in one-letter code: Probable butyrate kinase (356 aa).

It belongs to the acetokinase family.

Its subcellular location is the cytoplasm. It catalyses the reaction butanoate + ATP = butanoyl phosphate + ADP. The chain is Probable butyrate kinase from Coprothermobacter proteolyticus (strain ATCC 35245 / DSM 5265 / OCM 4 / BT).